We begin with the raw amino-acid sequence, 488 residues long: Glutamyl-tRNA(Gln) amidotransferase subunit A (488 aa).

Residues K77 and S152 each act as charge relay system in the active site. S176 acts as the Acyl-ester intermediate in catalysis.

It belongs to the amidase family. GatA subfamily. In terms of assembly, heterotrimer of A, B and C subunits.

It carries out the reaction L-glutamyl-tRNA(Gln) + L-glutamine + ATP + H2O = L-glutaminyl-tRNA(Gln) + L-glutamate + ADP + phosphate + H(+). Functionally, allows the formation of correctly charged Gln-tRNA(Gln) through the transamidation of misacylated Glu-tRNA(Gln) in organisms which lack glutaminyl-tRNA synthetase. The reaction takes place in the presence of glutamine and ATP through an activated gamma-phospho-Glu-tRNA(Gln). The polypeptide is Glutamyl-tRNA(Gln) amidotransferase subunit A (Streptococcus sanguinis (strain SK36)).